The primary structure comprises 1045 residues: Isoleucine--tRNA ligase (1045 aa).

Positions 49-59 match the 'HIGH' region motif; sequence PYCSGRIHLGT. Residues 591–595 carry the 'KMSKS' region motif; it reads KMSKS. Lys-594 contributes to the ATP binding site.

It belongs to the class-I aminoacyl-tRNA synthetase family. IleS type 2 subfamily. In terms of assembly, monomer. Requires Zn(2+) as cofactor.

It localises to the cytoplasm. The catalysed reaction is tRNA(Ile) + L-isoleucine + ATP = L-isoleucyl-tRNA(Ile) + AMP + diphosphate. Catalyzes the attachment of isoleucine to tRNA(Ile). As IleRS can inadvertently accommodate and process structurally similar amino acids such as valine, to avoid such errors it has two additional distinct tRNA(Ile)-dependent editing activities. One activity is designated as 'pretransfer' editing and involves the hydrolysis of activated Val-AMP. The other activity is designated 'posttransfer' editing and involves deacylation of mischarged Val-tRNA(Ile). This Methanothermobacter marburgensis (strain ATCC BAA-927 / DSM 2133 / JCM 14651 / NBRC 100331 / OCM 82 / Marburg) (Methanobacterium thermoautotrophicum) protein is Isoleucine--tRNA ligase.